The primary structure comprises 114 residues: Nucleoid-associated protein Cyan7425_0899 (114 aa).

The protein belongs to the YbaB/EbfC family. In terms of assembly, homodimer.

It is found in the cytoplasm. It localises to the nucleoid. Binds to DNA and alters its conformation. May be involved in regulation of gene expression, nucleoid organization and DNA protection. The protein is Nucleoid-associated protein Cyan7425_0899 of Cyanothece sp. (strain PCC 7425 / ATCC 29141).